Here is a 410-residue protein sequence, read N- to C-terminus: MANDLFNSFMTGPDENGRFGDFGGRFVSETLMPLILELEEQYENAKTDESFWAEMNDLWTHYVGRPSPLYFAERLTDHLGGAKVYMKRDELNHTGAHKINNVLGQIILARRMGKTRIIAETGAGQHGVATATVCAKFGLKCVVYMGAHDVERQAPNVFRMRLLGAEVVPVTSGRGTLKDAMNDALRDWVTNVRDTFYCIGTVAGPHPYPAMVRDFQAIIGKEVRTQMTAAEGRFPDTVIAAIGGGSNAMGLFYPFLDDKEVGIIGVEAGGKGVNAKMEHCASLTGGRPGVLHGNRTYLLQDDDGQILEGFSISAGLDYPGIGPEHAWLHDIGRAQYVSITDVEALEAFQLCCELEGIIPALEPSHALAHVMKIAPDLPSDHIICMNMCGRGDKDIFTVAKALGFEMGEFA.

An N6-(pyridoxal phosphate)lysine modification is found at lysine 98.

Belongs to the TrpB family. As to quaternary structure, tetramer of two alpha and two beta chains. Pyridoxal 5'-phosphate is required as a cofactor.

It carries out the reaction (1S,2R)-1-C-(indol-3-yl)glycerol 3-phosphate + L-serine = D-glyceraldehyde 3-phosphate + L-tryptophan + H2O. The protein operates within amino-acid biosynthesis; L-tryptophan biosynthesis; L-tryptophan from chorismate: step 5/5. In terms of biological role, the beta subunit is responsible for the synthesis of L-tryptophan from indole and L-serine. The sequence is that of Tryptophan synthase beta chain from Roseobacter denitrificans (strain ATCC 33942 / OCh 114) (Erythrobacter sp. (strain OCh 114)).